The primary structure comprises 179 residues: Large ribosomal subunit protein uL5 (179 aa).

This sequence belongs to the universal ribosomal protein uL5 family. Part of the 50S ribosomal subunit; part of the 5S rRNA/L5/L18/L25 subcomplex. Contacts the 5S rRNA and the P site tRNA. Forms a bridge to the 30S subunit in the 70S ribosome.

In terms of biological role, this is one of the proteins that bind and probably mediate the attachment of the 5S RNA into the large ribosomal subunit, where it forms part of the central protuberance. In the 70S ribosome it contacts protein S13 of the 30S subunit (bridge B1b), connecting the 2 subunits; this bridge is implicated in subunit movement. Contacts the P site tRNA; the 5S rRNA and some of its associated proteins might help stabilize positioning of ribosome-bound tRNAs. This Pseudomonas putida (strain W619) protein is Large ribosomal subunit protein uL5.